Reading from the N-terminus, the 185-residue chain is Calcium-binding protein K-like (185 aa).

EF-hand domains follow at residues 60-95 (WDEASMVRMFKLFDSDGNGVIDVKEFITALYMMTRA) and 96-131 (PTTDKLGFLFDLFDSDKSGYLEAGEIEKLVNIVVVC). Aspartate 73, aspartate 75, asparagine 77, glutamate 84, aspartate 109, aspartate 111, serine 113, tyrosine 115, and glutamate 120 together coordinate Ca(2+).

Belongs to the recoverin family.

The polypeptide is Calcium-binding protein K-like (Dictyostelium discoideum (Social amoeba)).